The primary structure comprises 179 residues: Large ribosomal subunit protein uL5 (179 aa).

In terms of assembly, contacts the P site tRNA. Forms a bridge to the 30S subunit in the 70S ribosome. Part of the 50S ribosomal subunit. Part of the 5S rRNA/L5/L18 subcomplex; in this organism only 2 proteins, L5 and L18 have been shown to be part of the 5S rRNA subcomplex, unlike E.coli and T.thermophilus where L25 (TL5) is also found. Has been shown to bind 5S rRNA.

This is one of the proteins that bind and probably mediate the attachment of the 5S RNA into the large ribosomal subunit, where it forms part of the central protuberance. In the 70S ribosome it contacts protein S13 of the 30S subunit (bridge B1b), connecting the 2 subunits; this bridge is implicated in subunit movement. Contacts the P site tRNA; the 5S rRNA and some of its associated proteins might help stabilize positioning of ribosome-bound tRNAs. In Geobacillus stearothermophilus (Bacillus stearothermophilus), this protein is Large ribosomal subunit protein uL5 (rplE).